The sequence spans 1024 residues: NLR family CARD domain-containing protein 4 (1024 aa).

In terms of domain architecture, CARD spans 1 to 88 (MNFIKDNSRA…PLFQDLNGQS (88 aa)). The segment at 95 to 298 (EGDLDDLAQD…QFGALTAEVG (204 aa)) is nucleotide-binding domain (NBD). In terms of domain architecture, NACHT spans 163-476 (SPCIIEGESG…VTKGNGYLQK (314 aa)). Residue 169–176 (GESGKGKS) coordinates ATP. The interval 356-463 (SHTQTTLFHT…RLSSLLTSHE (108 aa)) is winged-helix domain (WHD). A Phosphoserine modification is found at Ser533. LRR repeat units follow at residues 578 to 598 (FFQG…LFDF), 656 to 679 (KQEF…DIRY), 735 to 758 (VTNL…LTDS), 762 to 785 (LKNL…KLAE), 787 to 812 (LKNL…DYIV), 824 to 847 (EIQL…LHNL), 848 to 870 (VKLS…ALHE), 878 to 902 (LEQL…LLKH), 911 to 933 (KLGL…FFGK), 936 to 963 (LKNF…VFEN), 965 to 985 (KQLV…ALVR), and 999 to 1021 (EARL…AFKL).

As to quaternary structure, homooligomer; homooligomerizes to induce formation of the NLRC4 inflammasome. Homooligomerizes following activation by pathogenic proteins. Component of the NLRC4 inflammasome, at least composed of NLRC4 and caspase-1 (CASP1). Some NLRC4 inflammasomes contain PYCARD/ASC, while some others directly contact and activate CASP1. Interacts (via CARD domain) with PYCARD/ASC, pro-caspase-1 (CASP1), NOD2, BCL10 and NALP1 (NAC) by CARD-CARD interaction. Interacts with EIF2AK2/PKR. In terms of processing, phosphorylated at Ser-533 following infection of macrophages with S.typhimurium (Salmonella). Phosphorylation is essential for NLRC4 inflammasome function to promote caspase-1 activation and pyroptosis. PRKCD phosphorylates Ser-533 in vitro. As to expression, isoform 2 is expressed ubiquitously, although highly expressed in lung and spleen. Isoform 1 is highly expressed in lung, followed by leukocytes especially monocytes, lymph node, colon, brain, prostate, placenta, spleen, bone marrow and fetal liver. Isoform 4 is only detected in brain.

Its subcellular location is the cytoplasm. The protein resides in the cytosol. It is found in the inflammasome. Functionally, key component of inflammasomes that indirectly senses specific proteins from pathogenic bacteria and fungi and responds by assembling an inflammasome complex that promotes caspase-1 activation, cytokine production and macrophage pyroptosis. The NLRC4 inflammasome is activated as part of the innate immune response to a range of intracellular bacteria. This Homo sapiens (Human) protein is NLR family CARD domain-containing protein 4 (NLRC4).